The following is a 349-amino-acid chain: 11-beta-hydroxysteroid dehydrogenase 1A (349 aa).

Residues 10-30 traverse the membrane as a helical; Signal-anchor for type II membrane protein segment; sequence LTAPFFTFFGLCFFLPPFYFF. NADP(+) is bound by residues 54 to 80 and aspartate 105; that span reads GASSGIGEQLAYEYACRGACLALTARR. Serine 184 is a substrate binding site. Tyrosine 197 functions as the Proton acceptor in the catalytic mechanism. NADP(+)-binding positions include 197-201 and lysine 201; that span reads YNASK.

This sequence belongs to the short-chain dehydrogenases/reductases (SDR) family. As to expression, expressed in the above-ground part of seedlings, especially in the vascular tissues. Also detected in the buds and silique pedicels. Highly induced in oil-accumulating tissues of maturing seeds.

It localises to the lipid droplet. The protein resides in the membrane. It catalyses the reaction an 11beta-hydroxysteroid + NADP(+) = an 11-oxosteroid + NADPH + H(+). The catalysed reaction is 17beta-estradiol + NADP(+) = estrone + NADPH + H(+). The enzyme catalyses corticosterone + NADP(+) = 11-dehydrocorticosterone + NADPH + H(+). It carries out the reaction cortisone + NADPH + H(+) = cortisol + NADP(+). In terms of biological role, catalyzes 11-beta, 17-beta-hydroxysteroid and reduces 17-beta-ketosteroids. Involved in regulating plant growth and development, probably promoting or mediating brassinosteroid effects. Plays a role during seed maturation. In Arabidopsis thaliana (Mouse-ear cress), this protein is 11-beta-hydroxysteroid dehydrogenase 1A (HSD1).